A 334-amino-acid polypeptide reads, in one-letter code: GTP 3',8-cyclase (334 aa).

The 227-residue stretch at 13 to 239 (RFHRKFYYLR…KVKAVNDGPA (227 aa)) folds into the Radical SAM core domain. Arginine 22 is a binding site for GTP. Residues cysteine 29 and cysteine 33 each coordinate [4Fe-4S] cluster. Position 35 (tyrosine 35) interacts with S-adenosyl-L-methionine. A [4Fe-4S] cluster-binding site is contributed by cysteine 36. Residue arginine 73 participates in GTP binding. Glycine 77 contacts S-adenosyl-L-methionine. A GTP-binding site is contributed by threonine 104. Serine 128 serves as a coordination point for S-adenosyl-L-methionine. Residue lysine 165 coordinates GTP. Methionine 199 contacts S-adenosyl-L-methionine. 2 residues coordinate [4Fe-4S] cluster: cysteine 262 and cysteine 265. A GTP-binding site is contributed by 267–269 (RLR). A [4Fe-4S] cluster-binding site is contributed by cysteine 279.

Belongs to the radical SAM superfamily. MoaA family. Monomer and homodimer. [4Fe-4S] cluster is required as a cofactor.

The catalysed reaction is GTP + AH2 + S-adenosyl-L-methionine = (8S)-3',8-cyclo-7,8-dihydroguanosine 5'-triphosphate + 5'-deoxyadenosine + L-methionine + A + H(+). The protein operates within cofactor biosynthesis; molybdopterin biosynthesis. Functionally, catalyzes the cyclization of GTP to (8S)-3',8-cyclo-7,8-dihydroguanosine 5'-triphosphate. This is GTP 3',8-cyclase from Vibrio atlanticus (strain LGP32) (Vibrio splendidus (strain Mel32)).